A 209-amino-acid chain; its full sequence is Uracil phosphoribosyltransferase (209 aa).

5-phospho-alpha-D-ribose 1-diphosphate is bound by residues Arg-79, Arg-104, and 131 to 139 (DPMLATGGS). Uracil is bound by residues Ile-194 and 199–201 (GDA). Asp-200 serves as a coordination point for 5-phospho-alpha-D-ribose 1-diphosphate.

This sequence belongs to the UPRTase family. Mg(2+) serves as cofactor.

It carries out the reaction UMP + diphosphate = 5-phospho-alpha-D-ribose 1-diphosphate + uracil. It functions in the pathway pyrimidine metabolism; UMP biosynthesis via salvage pathway; UMP from uracil: step 1/1. Allosterically activated by GTP. Its function is as follows. Catalyzes the conversion of uracil and 5-phospho-alpha-D-ribose 1-diphosphate (PRPP) to UMP and diphosphate. This chain is Uracil phosphoribosyltransferase, found in Geobacillus kaustophilus (strain HTA426).